The following is a 390-amino-acid chain: MLPGVGVFGTSLTSRVIIPLLKDEGFSVKALWGRTQEEAEELAKEMSVPFYTNRIDDVLLHQDVDLVCINLPPPLTKQIAVKTLGIGKNVICDRTATPLDAFRMMSAAHYYPKLMSIMGNVLRFLPAFVKMKQLIQEGYVGELQVCEVQVHSGSLLGKKYNWSCDDLMGGGGLHSVGSYIIDLLTFLTSQKAVKVHGLLKTFVKQTDHIKGIRQITSDDFCTFQMVLEGGVCCTVTLNFNVPGEFKQDVIVVGSAGRLIVTGIDLYGQRNSSSDRELLLKDSTPVSNSLLPEKAFSDIPSPYLRGTIKMVQAVRQAFQDQDDRRTWDGRPLTMAATFDDCLYALCVVDTIKKSNQTGEWQNIVIMTEEPELSPAYLISEAMRRSRMSLYC.

The signal sequence occupies residues 1–21; it reads MLPGVGVFGTSLTSRVIIPLL. 3 N-linked (GlcNAc...) asparagine glycosylation sites follow: Asn-161, Asn-270, and Asn-354.

The protein belongs to the Gfo/Idh/MocA family. In terms of assembly, homodimer.

It is found in the secreted. Probably catalytically inactive enzyme. Does not bind NAD or NADP. The chain is Glucose-fructose oxidoreductase domain-containing protein 1 (gfod1) from Xenopus tropicalis (Western clawed frog).